A 352-amino-acid polypeptide reads, in one-letter code: Phosphoribosylformylglycinamidine cyclo-ligase (352 aa).

This sequence belongs to the AIR synthase family.

The protein localises to the cytoplasm. The enzyme catalyses 2-formamido-N(1)-(5-O-phospho-beta-D-ribosyl)acetamidine + ATP = 5-amino-1-(5-phospho-beta-D-ribosyl)imidazole + ADP + phosphate + H(+). Its pathway is purine metabolism; IMP biosynthesis via de novo pathway; 5-amino-1-(5-phospho-D-ribosyl)imidazole from N(2)-formyl-N(1)-(5-phospho-D-ribosyl)glycinamide: step 2/2. The polypeptide is Phosphoribosylformylglycinamidine cyclo-ligase (Hahella chejuensis (strain KCTC 2396)).